The primary structure comprises 458 residues: Glutamate--tRNA ligase 2 (458 aa).

Positions 20-30 match the 'HIGH' region motif; that stretch reads PSPTGLIHVGN. Residues 251 to 255 carry the 'KMSKS' region motif; it reads GLSKR. Position 254 (Lys-254) interacts with ATP.

The protein belongs to the class-I aminoacyl-tRNA synthetase family. Glutamate--tRNA ligase type 1 subfamily. As to quaternary structure, monomer.

The protein localises to the cytoplasm. The enzyme catalyses tRNA(Glu) + L-glutamate + ATP = L-glutamyl-tRNA(Glu) + AMP + diphosphate. Its function is as follows. Catalyzes the attachment of glutamate to tRNA(Glu) in a two-step reaction: glutamate is first activated by ATP to form Glu-AMP and then transferred to the acceptor end of tRNA(Glu). This Xanthobacter autotrophicus (strain ATCC BAA-1158 / Py2) protein is Glutamate--tRNA ligase 2.